We begin with the raw amino-acid sequence, 65 residues long: Large ribosomal subunit protein bL35 (65 aa).

The protein belongs to the bacterial ribosomal protein bL35 family.

The chain is Large ribosomal subunit protein bL35 from Synechococcus sp. (strain CC9605).